A 530-amino-acid chain; its full sequence is UDP-glucuronosyltransferase 2B14 (530 aa).

A signal peptide spans M1–C24. N-linked (GlcNAc...) asparagine glycans are attached at residues N134 and N316. A helical transmembrane segment spans residues V494 to I510.

The protein belongs to the UDP-glycosyltransferase family.

It is found in the microsome membrane. Its subcellular location is the endoplasmic reticulum membrane. The catalysed reaction is glucuronate acceptor + UDP-alpha-D-glucuronate = acceptor beta-D-glucuronoside + UDP + H(+). Functionally, UDPGT is of major importance in the conjugation and subsequent elimination of potentially toxic xenobiotics and endogenous compounds. In Oryctolagus cuniculus (Rabbit), this protein is UDP-glucuronosyltransferase 2B14 (UGT2B14).